The chain runs to 542 residues: Thermosome subunit alpha (542 aa).

It belongs to the TCP-1 chaperonin family. As to quaternary structure, forms a Heterooligomeric complex of two stacked eight-membered rings.

Functionally, molecular chaperone; binds unfolded polypeptides in vitro, and has a weak ATPase activity. The polypeptide is Thermosome subunit alpha (thsA) (Methanothermobacter thermautotrophicus (strain ATCC 29096 / DSM 1053 / JCM 10044 / NBRC 100330 / Delta H) (Methanobacterium thermoautotrophicum)).